The sequence spans 433 residues: Xylose isomerase (433 aa).

Catalysis depends on residues histidine 99 and aspartate 102. Mg(2+)-binding residues include glutamate 230, glutamate 266, histidine 269, aspartate 294, aspartate 305, aspartate 307, and aspartate 337.

This sequence belongs to the xylose isomerase family. Homotetramer. It depends on Mg(2+) as a cofactor.

It is found in the cytoplasm. It catalyses the reaction alpha-D-xylose = alpha-D-xylulofuranose. The polypeptide is Xylose isomerase (Cereibacter sphaeroides (strain ATCC 17029 / ATH 2.4.9) (Rhodobacter sphaeroides)).